The primary structure comprises 204 residues: FMN-dependent NADH:quinone oxidoreductase (204 aa).

FMN contacts are provided by residues Ser9 and 15–17; that span reads SAS.

It belongs to the azoreductase type 1 family. As to quaternary structure, homodimer. FMN serves as cofactor.

The enzyme catalyses 2 a quinone + NADH + H(+) = 2 a 1,4-benzosemiquinone + NAD(+). It catalyses the reaction N,N-dimethyl-1,4-phenylenediamine + anthranilate + 2 NAD(+) = 2-(4-dimethylaminophenyl)diazenylbenzoate + 2 NADH + 2 H(+). In terms of biological role, quinone reductase that provides resistance to thiol-specific stress caused by electrophilic quinones. Functionally, also exhibits azoreductase activity. Catalyzes the reductive cleavage of the azo bond in aromatic azo compounds to the corresponding amines. The sequence is that of FMN-dependent NADH:quinone oxidoreductase from Xanthomonas campestris pv. campestris (strain ATCC 33913 / DSM 3586 / NCPPB 528 / LMG 568 / P 25).